The following is a 141-amino-acid chain: Hemoglobin subunit alpha (141 aa).

In terms of domain architecture, Globin spans 1 to 141 (VLSPADKTNV…VSTVLTSKYR (141 aa)). S3 carries the post-translational modification Phosphoserine. K7 carries the post-translational modification N6-succinyllysine. T8 carries the post-translational modification Phosphothreonine. Position 11 is an N6-succinyllysine (K11). K16 carries the post-translational modification N6-acetyllysine; alternate. K16 carries the N6-succinyllysine; alternate modification. Y24 bears the Phosphotyrosine mark. S35 is subject to Phosphoserine. At K40 the chain carries N6-succinyllysine. Phosphoserine is present on S49. Residue H58 participates in O2 binding. H87 is a heme b binding site. S102 is subject to Phosphoserine. T108 bears the Phosphothreonine mark. S124 bears the Phosphoserine mark. A phosphothreonine mark is found at T134 and T137. A Phosphoserine modification is found at S138.

Belongs to the globin family. Heterotetramer of two alpha chains and two beta chains. As to expression, red blood cells.

Functionally, involved in oxygen transport from the lung to the various peripheral tissues. Its function is as follows. Hemopressin acts as an antagonist peptide of the cannabinoid receptor CNR1. Hemopressin-binding efficiently blocks cannabinoid receptor CNR1 and subsequent signaling. In Martes foina (Beech marten), this protein is Hemoglobin subunit alpha (HBA).